The chain runs to 569 residues: Proton-coupled zinc antiporter SLC30A9, mitochondrial (569 aa).

Residues 1 to 68 (MLPGLAAAAA…IGTLSQVKLY (68 aa)) constitute a mitochondrion transit peptide. 5 helical membrane passes run 240-260 (VVMV…LAWI), 315-335 (GVGI…MGLL), 343-363 (LLWA…TLLV), 393-413 (VILL…TCMG), and 425-445 (SLGS…LIYT). The LXXLL motif signature appears at 463-467 (LTELL).

It belongs to the cation diffusion facilitator (CDF) transporter (TC 2.A.4) family. SLC30A subfamily. In terms of assembly, interacts with GRIP1, ESR1, AR and CTNNB1.

The protein resides in the mitochondrion membrane. It localises to the nucleus. It is found in the endoplasmic reticulum. It catalyses the reaction Zn(2+)(in) + 2 H(+)(out) = Zn(2+)(out) + 2 H(+)(in). Functionally, mitochondrial proton-coupled zinc ion antiporter mediating the export of zinc from the mitochondria and involved in zinc homeostasis, zinc mobilization as well as mitochondrial morphology and health. In nucleus, functions as a secondary coactivator for nuclear receptors by cooperating with p160 coactivators subtypes. Plays a role in transcriptional activation of Wnt-responsive genes. In Pongo abelii (Sumatran orangutan), this protein is Proton-coupled zinc antiporter SLC30A9, mitochondrial (SLC30A9).